The chain runs to 134 residues: Large ribosomal subunit protein uL18 (134 aa).

The protein belongs to the universal ribosomal protein uL18 family. As to quaternary structure, part of the 50S ribosomal subunit; part of the 5S rRNA/L5/L18/L25 subcomplex. Contacts the 5S and 23S rRNAs.

This is one of the proteins that bind and probably mediate the attachment of the 5S RNA into the large ribosomal subunit, where it forms part of the central protuberance. This Corynebacterium efficiens (strain DSM 44549 / YS-314 / AJ 12310 / JCM 11189 / NBRC 100395) protein is Large ribosomal subunit protein uL18.